We begin with the raw amino-acid sequence, 274 residues long: Putative outer membrane protein CPn_1073/CP_0776/CPj1073/CpB1118 (274 aa).

Positions Met-1–Ala-21 are cleaved as a signal peptide.

Its subcellular location is the cell outer membrane. This chain is Putative outer membrane protein CPn_1073/CP_0776/CPj1073/CpB1118, found in Chlamydia pneumoniae (Chlamydophila pneumoniae).